Reading from the N-terminus, the 289-residue chain is N-methyltransferase FrzE (289 aa).

It belongs to the methyltransferase superfamily.

The catalysed reaction is (1S,4S)-4-[(4-hydroxyphenyl)methyl]-2,5-diazaspiro[bicyclo[3.2.1]octane-6,1'-cyclohexan]-4'-one + S-adenosyl-L-methionine = (1S,4S)-4-[(4-hydroxyphenyl)methyl]-2-methyl-2,5-diazaspiro[bicyclo[3.2.1]octane-6,1'-cyclohexan]-4'-one + S-adenosyl-L-homocysteine + H(+). The enzyme catalyses (1S,4S)-4-[(4-methoxyphenyl)methyl]-2,5-diazaspiro[bicyclo[3.2.1]octane-6,1'-cyclohexan]-4'-one + S-adenosyl-L-methionine = (1S,4S)-4-[(4-methoxyphenyl)methyl]-2-methyl-2,5-diazaspiro[bicyclo[3.2.1]octane-6,1'-cyclohexan]-4'-one + S-adenosyl-L-homocysteine + H(+). It functions in the pathway secondary metabolite biosynthesis. Functionally, N-methyltransferase; part of the gene cluster that mediates the biosynthesis of the alkaloid (-)-FR901483, a potent immunosuppressant that shows efficacy in animal models and a probable inhibitor of purine nucleotide biosynthesis by targeting phosphoribosylpyrophosphate amidotransferase (PPAT). Within the pathway, FrzE methylates the amine at position C10'. The biosynthesis of (-)-FR901483 starts with the condensation of two L-tyrosines to yield (S,S)-dityrosyl-piperazine. This process occurs in 3 steps with the non-canonical nonribosomal peptide synthetase FrzA catalyzing the reduction of L-tyrosine into L-tyrosinal, the spontaneous condensation of 2 L-tyrosinal units, and the subsequent reduction by the NmrA-like family domain-containing oxidoreductase FrzB. The cytochrome P450 monooxygenase FrzC then performs coupling between N10 and C1' to morph the piperazine into a 1,4-diazabicyclo[3.2.1]octane spiro-fused to a 2,5-cyclohexadienone. The dienone portion is further reduced to cyclohexanone by the flavin-dependent reductase FrzD. The methyltranserases (MTs) FrzE and FrzF are then involved in the methylation at the C10' amine and the C4 phenolic oxygen, respectively. The order of the two MTs appear to be interchangeable. Cleavage of the C9-N10' bond by the dioxygenase FrzG then leads to formation of a conjugated iminium. In addition to the oxidation of C9, an additional dehydrogenation between C7 and C8 can occur to give a likely shunt product. The next biosynthetic step is the intramolecular aldol condensation catalyzed by the newly identified aldolase FrzH to yield an aza-tricyclic product with the formation of a C9-C3' bond. The short-chain dehydrogenase/reductase FrzI then produces dephospho-(-)-FR901483 that is phosphorylated at C4'-OH into (-)-FR901483 by the phosphotransferase FrzJ. This is N-methyltransferase FrzE from Cladobotryum sp.